Consider the following 1185-residue polypeptide: Zinc finger SWIM domain-containing protein 5 (1185 aa).

Residues 1-10 (MADGGEREEL) are compositionally biased toward basic and acidic residues. 2 disordered regions span residues 1-45 (MADG…GGAG) and 123-153 (AGAAGGAAGASPAEEGPQPPPGAAAPAGSAP). The SWIM-type zinc finger occupies 219–256 (YKVAISFDRCKITSVTCGCGNKDIFYCAHVVALSLYRI).

The sequence is that of Zinc finger SWIM domain-containing protein 5 (ZSWIM5) from Homo sapiens (Human).